We begin with the raw amino-acid sequence, 949 residues long: MMWKMGPHFTTLLAMWLVCGSASHSPALDSDSHTGRKVPLVSPISSRSARYLRHTGRSGGVEKSTQEEPNPQPFQRRKSVPVLRLAHPTMRPPPSGINGVPVRPEVRPIARSSAREMVRDEGSSARTRMLRFPSGSSSPNILASFAGKNRVWVISAPHASEGYYRLMMSLLKDDVYCELAERHIQQIVLFHQAGEEGGKVRRITNEGQILEQPLDPNLIPKLMSFLKLEKGKFSMVLLKKTLQVEERYPYPVRLEAMYEVIDQGPIRRIEKIRQKGFVQKCKASGIEGHVVQEGNEGGGGAGGTGLGGDKRKEDPRRTQVHPTREAPRKQATSKAATPQPPPTPRATTLPPAPVTTATRATSRVVTIAARPTTTTAYPATQRPWTSRLHPFSVSHRPPATAEVTTARGPSVSEQLYPLPRKEQQREKPQATRRPSKATNYGSFTATPPPTLWEVSARVVGTSRFRDNRTDKREHGHQDPNAVPGPHKPVKGKLPKKKDRILSNEYEDKYDLSQPTSSQGEEERQVDSVPSQNAKESKKLEKLEKPEKEKKKKGKSAKQDKLLKSEKQAKKAEKKTKQEKDKNKKKKAGKTEQDDNQKPTAKHLAPSPKKSVADLLGSFEGKRRLLLITTPKAENNMYVQQRDEYLESFCKMATRRISVVTIFGPVNNSSMKIDHFQLDNEKPMRVVDDDDLVDQHLISELRKEYGMTYDDFFMVLTDVDLRVKQYYEVPIAMKSVFDLIDTFQSRIKDMEKQKKEGIACKEDKRQSLENFLSRFRWRRRLLVISAPNDEDWAYSQQLSALNGQACNFGLRHITILKLLGVGEEVGGVLELFPINGSSIVEREDVPAHLVKDIRNYFQVSPEYFSMLLVGKDGNVKSWYPSPMWSMVIVYDLIDSMQLRRQEMAIQQSLGMRCPEDEYAGYGYHSYHQGYQDGYQDDYRHHESYHHGYPY.

The signal sequence occupies residues 1–22 (MMWKMGPHFTTLLAMWLVCGSA). 3 disordered regions span residues 24 to 79 (HSPA…RRKS), 112 to 132 (SSAR…MLRF), and 289 to 610 (HVVQ…PKKS). Over residues 112–123 (SSAREMVRDEGS) the composition is skewed to basic and acidic residues. Positions 295–307 (NEGGGGAGGTGLG) are enriched in gly residues. Residues 308-328 (GDKRKEDPRRTQVHPTREAPR) are compositionally biased toward basic and acidic residues. The segment covering 345 to 380 (RATTLPPAPVTTATRATSRVVTIAARPTTTTAYPAT) has biased composition (low complexity). Positions 419–429 (PRKEQQREKPQ) are enriched in basic and acidic residues. Positions 436 to 445 (KATNYGSFTA) are enriched in polar residues. Positions 463–477 (RFRDNRTDKREHGHQ) are enriched in basic and acidic residues. The N-linked (GlcNAc...) asparagine glycan is linked to N467. Basic residues predominate over residues 487–498 (KPVKGKLPKKKD). 3 stretches are compositionally biased toward basic and acidic residues: residues 499–510 (RILSNEYEDKYD), 534–548 (KESK…PEKE), and 556–581 (AKQD…EKDK). Residues K544 and K547 each participate in a glycyl lysine isopeptide (Lys-Gly) (interchain with G-Cter in SUMO2) cross-link. Positions 554–587 (KSAKQDKLLKSEKQAKKAEKKTKQEKDKNKKKKA) form a coiled coil.

This sequence belongs to the CCDC80 family. In terms of assembly, binds to various extracellular matrix proteins. In terms of processing, phosphorylated. In terms of tissue distribution, expressed in brain, stomach, colon, rectum, liver, lung, kidney, adipocytes and testis.

It is found in the secreted. Its subcellular location is the extracellular space. The protein localises to the extracellular matrix. Its function is as follows. Promotes cell adhesion and matrix assembly. The protein is Coiled-coil domain-containing protein 80 (Ccdc80) of Mus musculus (Mouse).